A 433-amino-acid chain; its full sequence is Enolase (433 aa).

Residue Q163 coordinates (2R)-2-phosphoglycerate. The active-site Proton donor is E205. Mg(2+) is bound by residues D241, E289, and D316. The (2R)-2-phosphoglycerate site is built by K341, R370, S371, and K392. Catalysis depends on K341, which acts as the Proton acceptor.

Belongs to the enolase family. Mg(2+) is required as a cofactor.

It is found in the cytoplasm. It localises to the secreted. Its subcellular location is the cell surface. The catalysed reaction is (2R)-2-phosphoglycerate = phosphoenolpyruvate + H2O. Its pathway is carbohydrate degradation; glycolysis; pyruvate from D-glyceraldehyde 3-phosphate: step 4/5. In terms of biological role, catalyzes the reversible conversion of 2-phosphoglycerate (2-PG) into phosphoenolpyruvate (PEP). It is essential for the degradation of carbohydrates via glycolysis. This chain is Enolase, found in Treponema denticola (strain ATCC 35405 / DSM 14222 / CIP 103919 / JCM 8153 / KCTC 15104).